The chain runs to 177 residues: Large ribosomal subunit protein uL6 (177 aa).

The protein belongs to the universal ribosomal protein uL6 family. As to quaternary structure, part of the 50S ribosomal subunit.

In terms of biological role, this protein binds to the 23S rRNA, and is important in its secondary structure. It is located near the subunit interface in the base of the L7/L12 stalk, and near the tRNA binding site of the peptidyltransferase center. The protein is Large ribosomal subunit protein uL6 of Ruegeria pomeroyi (strain ATCC 700808 / DSM 15171 / DSS-3) (Silicibacter pomeroyi).